We begin with the raw amino-acid sequence, 1441 residues long: MSYAAYKMMHWPTGVDHCAAGFVTHSPSDAAAFFTAATVGPGPEGDIDSAAAASRPRRLGPSPNLVVAAANVLEVYAVRAETAAEDGGGGTQPSSSSGAVLDGISGARLELVCYYRLHGNIESMTVLSDGAENRRATIALAFKDAKITCLEFDDAIHGLRTSSMHCFEGPEWQHLKRGRESFAWGPVIKADPLGRCGAALAYGLQMIILKAAQVGHSLVGEDEPTCALSSTAVCIESSYLIDLRALDMNHVKDFAFVHGYIEPVLVILHEQEPTWAGRILSKHHTCMISAFSISMTLKQHPVIWSAANLPHDAYQLLAVPPPISGVLVICANSIHYHSQSTSCSLDLNNFSSHPDGSPEISKSNFQVELDAAKATWLSNDIVMFSTKAGEMLLLTVVYDGRVVQRLDLMKSKASVLSSAVTSIGNSFFFLGSRLGDSLLVQFSYCASKSVLQDLTNERSADIEGDLPFSKRLKRIPSDVLQDVTSVEELSFQNIIAPNSLESAQKISYIVRDALINVGPLKDFSYGLRANADPNAMGNAKQSNYELVCCSGHGKNGSLSVLQQSIRPDLITEVELPSCRGIWTVYYKSYRGQMAEDNEYHAYLIISLENRTMVLETGDDLGEVTETVDYFVQASTIAAGNLFGRRRVIQVYGKGARVLDGSFMTQELNFTTHASESSSSEALGVACASIADPYVLLKMVDGSVQLLIGDYCTCTLSVNAPSIFISSSERIAACTLYRDRGPEPWLTKTRSDAWLSTGIAEAIDGNGTSSHDQSDIYCIICYESGKLEIFEVPSFRCVFSVENFISGEALLVDKFSQLIYEDSTKERYDCTKASLKKEAGDSIRIVELAMHRWSGQFSRPFLFGLLNDGTLLCYHAFSYEASESNVKRVPLSPQGSADHHNASDSRLRNLRFHRVSIDITSREDIPTLGRPRITTFNNVGGYEGLFLSGTRPAWVMVCRQRLRVHPQLCDGPIEAFTVLHNVNCSHGFIYVTSQGFLKICQLPSAYNYDSYWPVQKVPLHGTPHQVTYYAEQSLYPLIVSVPVVRPLNQVLSSMADQESVHHMDNDVTSTDALHKTYTVDEFEVRILELEKPGGHWETKSTIPMQLFENALTVRIVTLHNTTTKENETLLAIGTAYVLGEDVAARGRVLLFSFTKSENSQNLVTEVYSKESKGAVSAVASLQGHLLIASGPKITLNKWTGAELTAVAFYDAPLHVVSLNIVKNFVLFGDIHKSIYFLSWKEQGSQLSLLAKDFGSLDCFATEFLIDGSTLSLVASDSDKNVQIFYYAPKMVESWKGQKLLSRAEFHVGAHITKFLRLQMLPTQGLSSEKTNRFALLFGNLDGGIGCIAPIDELTFRRLQSLQRKLVDAVPHVCGLNPRSFRQFHSNGKGHRPGPDNIIDFELLCSYEMLSLDEQLDVAQQIGTTRSQILSNFSDISLGTSFL.

The protein belongs to the CPSF1 family. As to quaternary structure, CPSF is a heterotetramer composed of four distinct subunits 160, 100, 70 and 30 kDa.

It is found in the nucleus. Its function is as follows. CPSF plays a key role in pre-mRNA 3'-end formation, recognizing the AAUAAA signal sequence and interacting with poly(A)polymerase and other factors to bring about cleavage and poly(A) addition. This subunit is involved in the RNA recognition step of the polyadenylation reaction. The polypeptide is Probable cleavage and polyadenylation specificity factor subunit 1 (Oryza sativa subsp. japonica (Rice)).